Here is a 40-residue protein sequence, read N- to C-terminus: Probable non-specific lipid-transfer protein (40 aa).

Belongs to the plant LTP family. In terms of processing, phosphorylated by Ca(2+)-dependent protein kinase.

In terms of biological role, plant non-specific lipid-transfer proteins transfer phospholipids as well as galactolipids across membranes. May play a role in wax or cutin deposition in the cell walls of expanding epidermal cells and certain secretory tissues. This chain is Probable non-specific lipid-transfer protein, found in Triticum aestivum (Wheat).